The following is a 353-amino-acid chain: T-complex protein 1 subunit eta (353 aa).

Belongs to the TCP-1 chaperonin family. As to quaternary structure, heterooligomeric complex of about 850 to 900 kDa that forms two stacked rings, 12 to 16 nm in diameter.

Its subcellular location is the cytoplasm. Functionally, molecular chaperone; assists the folding of proteins upon ATP hydrolysis. Known to play a role, in vitro, in the folding of actin and tubulin. The polypeptide is T-complex protein 1 subunit eta (Tetrahymena thermophila).